An 862-amino-acid chain; its full sequence is Alanine--tRNA ligase (862 aa).

Zn(2+) contacts are provided by His552, His556, Cys653, and His657.

The protein belongs to the class-II aminoacyl-tRNA synthetase family. Zn(2+) serves as cofactor.

The protein resides in the cytoplasm. It carries out the reaction tRNA(Ala) + L-alanine + ATP = L-alanyl-tRNA(Ala) + AMP + diphosphate. Its function is as follows. Catalyzes the attachment of alanine to tRNA(Ala) in a two-step reaction: alanine is first activated by ATP to form Ala-AMP and then transferred to the acceptor end of tRNA(Ala). Also edits incorrectly charged Ser-tRNA(Ala) and Gly-tRNA(Ala) via its editing domain. The sequence is that of Alanine--tRNA ligase from Nitrosospira multiformis (strain ATCC 25196 / NCIMB 11849 / C 71).